We begin with the raw amino-acid sequence, 657 residues long: Knob-associated histidine-rich protein (657 aa).

Residues 1–34 (MKSFKNKNTLRRKKAFPVFTKILLVSFLVWVLKC) form the signal peptide. An N-linked (GlcNAc...) asparagine glycan is attached at Asn42. Residues 57-76 (AQKQHEHHHHHHHHHHHQHQ) are compositionally biased toward basic residues. 3 disordered regions span residues 57–138 (AQKQ…PSNE), 282–301 (AHDG…SEGY), and 352–657 (VNKY…GCCG). The span at 99 to 108 (PQVHQQVHGQ) shows a compositional bias: low complexity. A compositionally biased stretch (basic residues) spans 112–123 (HHHHHHHHHHLH). 2 stretches are compositionally biased toward basic and acidic residues: residues 357–378 (KHGD…EGEK) and 399–408 (KDNEDAESVK). Residues 409–425 (SKKHKSHDCEKKKSKKH) show a composition bias toward basic residues. Positions 426–435 (KDNEDAESVK) are enriched in basic and acidic residues. A compositionally biased stretch (basic residues) spans 453-468 (AAKKLTKKIKIKKKTN). Positions 473-496 (DGSKAHEKKENETKNTAGENKKVD) are enriched in basic and acidic residues. Positions 497–508 (STSADNKSTNAA) are enriched in polar residues. 2 stretches are compositionally biased toward basic and acidic residues: residues 512 to 523 (AKDKTQGGKTDK) and 551 to 578 (STSK…EATK). The segment covering 590–614 (ASTTEGATKGASTTAGSTTGATTGA) has biased composition (low complexity). Polar residues predominate over residues 628 to 643 (AANNGEQVMSRGQAQL). The segment covering 648 to 657 (KKKKKRGCCG) has biased composition (basic residues).

It localises to the secreted. Its function is as follows. KAHRP might mimick human histidine-rich glycoproteins to anchor host thrombospondin or a parasite analog in a binding complex with the endothelial cell receptor. This chain is Knob-associated histidine-rich protein (SD17), found in Plasmodium falciparum (isolate NF7 / Ghana).